We begin with the raw amino-acid sequence, 498 residues long: NADPH:adrenodoxin oxidoreductase, mitochondrial (498 aa).

The transit peptide at 1–37 (MSTHKAALCKVQILKLFLISARCVRITRFYGVCGLST) directs the protein to the mitochondrion. 4 residues coordinate FAD: alanine 54, glutamate 75, leucine 83, and valine 119. Residues 190-193 (QGNV), 234-235 (RR), and glutamate 246 contribute to the NADP(+) site. FAD is bound by residues tryptophan 404 and 411-413 (GVI). Glycine 411 is a binding site for NADP(+). The span at 469–488 (DSEETRRGETRGKPREKMLD) shows a compositional bias: basic and acidic residues. The tract at residues 469–489 (DSEETRRGETRGKPREKMLDV) is disordered.

Belongs to the ferredoxin--NADP reductase type 1 family. FAD serves as cofactor.

The protein resides in the mitochondrion inner membrane. The enzyme catalyses 2 reduced [adrenodoxin] + NADP(+) + H(+) = 2 oxidized [adrenodoxin] + NADPH. It functions in the pathway steroid metabolism; cholesterol metabolism. Serves as the first electron transfer protein in all the mitochondrial P450 systems including cholesterol side chain cleavage in all steroidogenic tissues, steroid 11-beta hydroxylation in the adrenal cortex, 25-OH-vitamin D3-24 hydroxylation in the kidney, and sterol C-27 hydroxylation in the liver. In Salvelinus fontinalis (Brook trout), this protein is NADPH:adrenodoxin oxidoreductase, mitochondrial (fdxr).